A 272-amino-acid chain; its full sequence is 4-hydroxy-tetrahydrodipicolinate reductase (272 aa).

An NAD(+)-binding site is contributed by 10 to 15 (GAAGRM). An NADP(+)-binding site is contributed by arginine 37. Residues 100-102 (GTT) and 124-127 (SGNM) contribute to the NAD(+) site. Histidine 157 (proton donor/acceptor) is an active-site residue. Histidine 158 is a (S)-2,3,4,5-tetrahydrodipicolinate binding site. Lysine 161 serves as the catalytic Proton donor. Residue 167–168 (GT) participates in (S)-2,3,4,5-tetrahydrodipicolinate binding.

The protein belongs to the DapB family.

It is found in the cytoplasm. The enzyme catalyses (S)-2,3,4,5-tetrahydrodipicolinate + NAD(+) + H2O = (2S,4S)-4-hydroxy-2,3,4,5-tetrahydrodipicolinate + NADH + H(+). It catalyses the reaction (S)-2,3,4,5-tetrahydrodipicolinate + NADP(+) + H2O = (2S,4S)-4-hydroxy-2,3,4,5-tetrahydrodipicolinate + NADPH + H(+). Its pathway is amino-acid biosynthesis; L-lysine biosynthesis via DAP pathway; (S)-tetrahydrodipicolinate from L-aspartate: step 4/4. Catalyzes the conversion of 4-hydroxy-tetrahydrodipicolinate (HTPA) to tetrahydrodipicolinate. In Methylocella silvestris (strain DSM 15510 / CIP 108128 / LMG 27833 / NCIMB 13906 / BL2), this protein is 4-hydroxy-tetrahydrodipicolinate reductase.